The sequence spans 363 residues: Sulfate/thiosulfate import ATP-binding protein CysA (363 aa).

The ABC transporter domain occupies 3–237 (IEINNISKYF…PATRFVLEFL (235 aa)). Position 35 to 42 (35 to 42 (GPSGSGKT)) interacts with ATP.

The protein belongs to the ABC transporter superfamily. Sulfate/tungstate importer (TC 3.A.1.6) family. In terms of assembly, the complex is composed of two ATP-binding proteins (CysA), two transmembrane proteins (CysT and CysW) and a solute-binding protein (CysP).

It localises to the cell inner membrane. It catalyses the reaction sulfate(out) + ATP + H2O = sulfate(in) + ADP + phosphate + H(+). It carries out the reaction thiosulfate(out) + ATP + H2O = thiosulfate(in) + ADP + phosphate + H(+). Part of the ABC transporter complex CysAWTP involved in sulfate/thiosulfate import. Responsible for energy coupling to the transport system. In Yersinia pseudotuberculosis serotype I (strain IP32953), this protein is Sulfate/thiosulfate import ATP-binding protein CysA.